The sequence spans 170 residues: Photosystem I assembly protein Ycf3 (170 aa).

TPR repeat units follow at residues 35–68 (AFCY…EEDP), 72–105 (SYII…NPRL), and 120–153 (GLKA…APNN).

The protein belongs to the Ycf3 family.

It is found in the plastid. The protein resides in the chloroplast thylakoid membrane. Its function is as follows. Essential for the assembly of the photosystem I (PSI) complex. May act as a chaperone-like factor to guide the assembly of the PSI subunits. This Gracilaria tenuistipitata var. liui (Red alga) protein is Photosystem I assembly protein Ycf3.